Here is a 145-residue protein sequence, read N- to C-terminus: Photosystem I reaction center subunit XI (145 aa).

3 consecutive transmembrane segments (helical) span residues 48 to 68 (LEIG…LGPL), 75 to 95 (LLVG…GLTI), and 125 to 145 (IGAF…SFFA).

It belongs to the PsaL family.

It localises to the plastid. The protein localises to the chloroplast thylakoid membrane. In Emiliania huxleyi (Coccolithophore), this protein is Photosystem I reaction center subunit XI.